Consider the following 260-residue polypeptide: Type II methyltransferase M1.MboII (260 aa).

S-adenosyl-L-methionine is bound by residues Cys12, Asp30, Lys197, Ser223–Thr225, and Asp241–Met242.

This sequence belongs to the N(4)/N(6)-methyltransferase family. At low concentration exists as a monomer and homodimer. Probably binds to DNA as a monomer.

It carries out the reaction a 2'-deoxyadenosine in DNA + S-adenosyl-L-methionine = an N(6)-methyl-2'-deoxyadenosine in DNA + S-adenosyl-L-homocysteine + H(+). In terms of biological role, a beta subtype methylase that recognizes the double-stranded sequence 5'-GAAGA-3', methylates A-5 on the top strand, and protects the DNA from cleavage by the MboII endonuclease. It is not known if the cytosine of the complementary sequence TCTTC is also methylated by this enzyme. This is Type II methyltransferase M1.MboII from Moraxella bovis.